The sequence spans 403 residues: MSEKGRLFTSESVTEGHPDKICDAVSDSVLDALLAADPRSRVAVETLVTTGQVHVVGEVTTTAKEAFADITNIVRERILDIGYDSSDKGFDGASCGVNIGIGAQSPDIAQGVDTAHEARVEGAADPLDAQGAGDQGLMFGYAINDTPELMPLPIALAHRLSRRLTEVRKNGVLPYLRPDGKTQVTIAYEDRVPVRLDTVVISTQHADDIDLVKTLDPDIREQVLKTVLDDLAHDTLDASAVRVLVNPTGKFVLGGPMGDAGLTGRKIIVDTYGGWARHGGGAFSGKDPSKVDRSAAYAMRWVAKNVVAAGLAERVEVQVAYAIGKAAPVGLFVETFGSEAVDPVKIEKAIGEVFDLRPGAIIRDLNLLRPIYAPTAAYGHFGRTDVDLPWERLDKVDDLKRAI.

Histidine 17 is an ATP binding site. Aspartate 19 serves as a coordination point for Mg(2+). Glutamate 45 lines the K(+) pocket. The L-methionine site is built by glutamate 58 and glutamine 104. A flexible loop region spans residues 104-114; the sequence is QSPDIAQGVDT. Residues 179–181, 250–251, aspartate 259, 265–266, alanine 282, and lysine 286 each bind ATP; these read DGK, KF, and RK. Aspartate 259 is a binding site for L-methionine. Lysine 290 is a binding site for L-methionine.

Belongs to the AdoMet synthase family. Homotetramer; dimer of dimers. Requires Mg(2+) as cofactor. K(+) is required as a cofactor.

Its subcellular location is the cytoplasm. The enzyme catalyses L-methionine + ATP + H2O = S-adenosyl-L-methionine + phosphate + diphosphate. Its pathway is amino-acid biosynthesis; S-adenosyl-L-methionine biosynthesis; S-adenosyl-L-methionine from L-methionine: step 1/1. In terms of biological role, catalyzes the formation of S-adenosylmethionine (AdoMet) from methionine and ATP. The overall synthetic reaction is composed of two sequential steps, AdoMet formation and the subsequent tripolyphosphate hydrolysis which occurs prior to release of AdoMet from the enzyme. The protein is S-adenosylmethionine synthase of Mycobacterium marinum (strain ATCC BAA-535 / M).